We begin with the raw amino-acid sequence, 264 residues long: S-adenosylmethionine decarboxylase proenzyme (264 aa).

Residue Ser-113 is the Schiff-base intermediate with substrate; via pyruvic acid of the active site. Residue Ser-113 is modified to Pyruvic acid (Ser); by autocatalysis. The active-site Proton acceptor; for processing activity is His-118. Cys-141 acts as the Proton donor; for catalytic activity in catalysis.

Belongs to the prokaryotic AdoMetDC family. Type 2 subfamily. In terms of assembly, heterooctamer of four alpha and four beta chains arranged as a tetramer of alpha/beta heterodimers. Requires pyruvate as cofactor. In terms of processing, is synthesized initially as an inactive proenzyme. Formation of the active enzyme involves a self-maturation process in which the active site pyruvoyl group is generated from an internal serine residue via an autocatalytic post-translational modification. Two non-identical subunits are generated from the proenzyme in this reaction, and the pyruvate is formed at the N-terminus of the alpha chain, which is derived from the carboxyl end of the proenzyme. The post-translation cleavage follows an unusual pathway, termed non-hydrolytic serinolysis, in which the side chain hydroxyl group of the serine supplies its oxygen atom to form the C-terminus of the beta chain, while the remainder of the serine residue undergoes an oxidative deamination to produce ammonia and the pyruvoyl group blocking the N-terminus of the alpha chain.

It carries out the reaction S-adenosyl-L-methionine + H(+) = S-adenosyl 3-(methylsulfanyl)propylamine + CO2. It participates in amine and polyamine biosynthesis; S-adenosylmethioninamine biosynthesis; S-adenosylmethioninamine from S-adenosyl-L-methionine: step 1/1. Catalyzes the decarboxylation of S-adenosylmethionine to S-adenosylmethioninamine (dcAdoMet), the propylamine donor required for the synthesis of the polyamines spermine and spermidine from the diamine putrescine. The polypeptide is S-adenosylmethionine decarboxylase proenzyme (Xanthomonas oryzae pv. oryzae (strain MAFF 311018)).